The chain runs to 274 residues: Orotidine 5'-phosphate decarboxylase (274 aa).

Residues aspartate 40, lysine 62–histidine 64, aspartate 93–threonine 102, tyrosine 227, and arginine 245 contribute to the substrate site. Catalysis depends on lysine 95, which acts as the Proton donor.

Belongs to the OMP decarboxylase family.

It catalyses the reaction orotidine 5'-phosphate + H(+) = UMP + CO2. It functions in the pathway pyrimidine metabolism; UMP biosynthesis via de novo pathway; UMP from orotate: step 2/2. The protein is Orotidine 5'-phosphate decarboxylase (pyrG) of Emericella nidulans (strain FGSC A4 / ATCC 38163 / CBS 112.46 / NRRL 194 / M139) (Aspergillus nidulans).